Here is a 179-residue protein sequence, read N- to C-terminus: Protein GrpE (179 aa).

The interval 1-29 (MQDQDKYAEQAASIEDPVTAEAASATTPT) is disordered.

It belongs to the GrpE family. In terms of assembly, homodimer.

It is found in the cytoplasm. In terms of biological role, participates actively in the response to hyperosmotic and heat shock by preventing the aggregation of stress-denatured proteins, in association with DnaK and GrpE. It is the nucleotide exchange factor for DnaK and may function as a thermosensor. Unfolded proteins bind initially to DnaJ; upon interaction with the DnaJ-bound protein, DnaK hydrolyzes its bound ATP, resulting in the formation of a stable complex. GrpE releases ADP from DnaK; ATP binding to DnaK triggers the release of the substrate protein, thus completing the reaction cycle. Several rounds of ATP-dependent interactions between DnaJ, DnaK and GrpE are required for fully efficient folding. The chain is Protein GrpE from Janthinobacterium sp. (strain Marseille) (Minibacterium massiliensis).